The primary structure comprises 421 residues: Medium-chain specific acyl-CoA dehydrogenase, mitochondrial (421 aa).

A mitochondrion-targeting transit peptide spans 1 to 25 (MAAAFRRGCRVLRSVSHFECRTQHS). N6-acetyllysine; alternate is present on residues K30 and K69. Residues K30 and K69 each carry the N6-succinyllysine; alternate modification. Residue K79 is modified to N6-acetyllysine. 158-167 (YCVTEPSAGS) is an FAD binding site. S167 provides a ligand contact to octanoyl-CoA. Position 179 is an N6-succinyllysine (K179). 191 to 193 (WIT) is an FAD binding site. K212 is subject to N6-acetyllysine; alternate. Residue K212 is modified to N6-succinyllysine; alternate. Octanoyl-CoA is bound at residue S216. K217, K235, K259, and K271 each carry N6-acetyllysine; alternate. 4 positions are modified to N6-succinyllysine; alternate: K217, K235, K259, and K271. 2 residues coordinate octanoyl-CoA: D278 and R281. N6-acetyllysine is present on K301. FAD is bound by residues 306-308 (RKT) and 316-317 (HQ). Octanoyl-CoA is bound by residues R349 and T351. Residue T351 is modified to Phosphothreonine. Position 374–378 (374–378 (QIFGG)) interacts with FAD. E401 serves as a coordination point for octanoyl-CoA. Catalysis depends on E401, which acts as the Proton acceptor. An FAD-binding site is contributed by 402–405 (GTAQ).

The protein belongs to the acyl-CoA dehydrogenase family. As to quaternary structure, homotetramer. Interacts with the heterodimeric electron transfer flavoprotein ETF. FAD serves as cofactor. Acetylated. Could occur at proximity of the cofactor-binding sites and reduce the catalytic activity. Could be deacetylated by SIRT3.

Its subcellular location is the mitochondrion matrix. The enzyme catalyses a medium-chain 2,3-saturated fatty acyl-CoA + oxidized [electron-transfer flavoprotein] + H(+) = a medium-chain (2E)-enoyl-CoA + reduced [electron-transfer flavoprotein]. It catalyses the reaction pentanoyl-CoA + oxidized [electron-transfer flavoprotein] + H(+) = (2E)-pentenoyl-CoA + reduced [electron-transfer flavoprotein]. The catalysed reaction is hexanoyl-CoA + oxidized [electron-transfer flavoprotein] + H(+) = (2E)-hexenoyl-CoA + reduced [electron-transfer flavoprotein]. It carries out the reaction octanoyl-CoA + oxidized [electron-transfer flavoprotein] + H(+) = (2E)-octenoyl-CoA + reduced [electron-transfer flavoprotein]. The enzyme catalyses decanoyl-CoA + oxidized [electron-transfer flavoprotein] + H(+) = (2E)-decenoyl-CoA + reduced [electron-transfer flavoprotein]. It catalyses the reaction dodecanoyl-CoA + oxidized [electron-transfer flavoprotein] + H(+) = (2E)-dodecenoyl-CoA + reduced [electron-transfer flavoprotein]. The catalysed reaction is tetradecanoyl-CoA + oxidized [electron-transfer flavoprotein] + H(+) = (2E)-tetradecenoyl-CoA + reduced [electron-transfer flavoprotein]. It carries out the reaction oxidized [electron-transfer flavoprotein] + hexadecanoyl-CoA + H(+) = (2E)-hexadecenoyl-CoA + reduced [electron-transfer flavoprotein]. Its pathway is lipid metabolism; mitochondrial fatty acid beta-oxidation. In terms of biological role, medium-chain specific acyl-CoA dehydrogenase is one of the acyl-CoA dehydrogenases that catalyze the first step of mitochondrial fatty acid beta-oxidation, an aerobic process breaking down fatty acids into acetyl-CoA and allowing the production of energy from fats. The first step of fatty acid beta-oxidation consists in the removal of one hydrogen from C-2 and C-3 of the straight-chain fatty acyl-CoA thioester, resulting in the formation of trans-2-enoyl-CoA. Electron transfer flavoprotein (ETF) is the electron acceptor that transfers electrons to the main mitochondrial respiratory chain via ETF-ubiquinone oxidoreductase (ETF dehydrogenase). Among the different mitochondrial acyl-CoA dehydrogenases, medium-chain specific acyl-CoA dehydrogenase acts specifically on acyl-CoAs with saturated 6 to 12 carbons long primary chains. The chain is Medium-chain specific acyl-CoA dehydrogenase, mitochondrial from Mus musculus (Mouse).